The sequence spans 373 residues: Chorismate synthase (373 aa).

Arg46 serves as a coordination point for NADP(+). FMN-binding positions include Arg123–Ser125, Asn251–Ala252, Gly295, Lys310–Ser314, and Arg337.

It belongs to the chorismate synthase family. FMNH2 serves as cofactor.

The enzyme catalyses 5-O-(1-carboxyvinyl)-3-phosphoshikimate = chorismate + phosphate. The protein operates within metabolic intermediate biosynthesis; chorismate biosynthesis; chorismate from D-erythrose 4-phosphate and phosphoenolpyruvate: step 7/7. Its function is as follows. Catalyzes the anti-1,4-elimination of the C-3 phosphate and the C-6 proR hydrogen from 5-enolpyruvylshikimate-3-phosphate (EPSP) to yield chorismate, which is the branch point compound that serves as the starting substrate for the three terminal pathways of aromatic amino acid biosynthesis. This reaction introduces a second double bond into the aromatic ring system. The sequence is that of Chorismate synthase from Methanococcus maripaludis (strain DSM 14266 / JCM 13030 / NBRC 101832 / S2 / LL).